The following is a 377-amino-acid chain: Chaperone protein DnaJ (377 aa).

Residues 5–70 enclose the J domain; the sequence is DFYEVLGVDR…EKRSAYDRMG (66 aa). A CR-type zinc finger spans residues 136–214; that stretch reads GCKKEISFTA…CHGTGVKDKS (79 aa). Zn(2+) is bound by residues C149, C152, C166, C169, C188, C191, C202, and C205. 4 CXXCXGXG motif repeats span residues 149–156, 166–173, 188–195, and 202–209; these read CETCDGKG, CSTCGGHG, CPNCGGSG, and CNDCHGTG. The tract at residues 353 to 377 is disordered; that stretch reads LDGDSKHHQSPKKKSFFEKLGDLFD. Residues 367 to 377 show a composition bias toward basic and acidic residues; the sequence is SFFEKLGDLFD.

Belongs to the DnaJ family. As to quaternary structure, homodimer. Zn(2+) is required as a cofactor.

It localises to the cytoplasm. Participates actively in the response to hyperosmotic and heat shock by preventing the aggregation of stress-denatured proteins and by disaggregating proteins, also in an autonomous, DnaK-independent fashion. Unfolded proteins bind initially to DnaJ; upon interaction with the DnaJ-bound protein, DnaK hydrolyzes its bound ATP, resulting in the formation of a stable complex. GrpE releases ADP from DnaK; ATP binding to DnaK triggers the release of the substrate protein, thus completing the reaction cycle. Several rounds of ATP-dependent interactions between DnaJ, DnaK and GrpE are required for fully efficient folding. Also involved, together with DnaK and GrpE, in the DNA replication of plasmids through activation of initiation proteins. This chain is Chaperone protein DnaJ, found in Psychrobacter sp. (strain PRwf-1).